Reading from the N-terminus, the 229-residue chain is Large ribosomal subunit protein bL25 (229 aa).

2 disordered regions span residues 1-21 (MSDALTLPAEARERAGKGASR) and 187-229 (PSAL…KGDD). The segment covering 196-207 (SEEEEDGEEVDA) has biased composition (acidic residues).

It belongs to the bacterial ribosomal protein bL25 family. CTC subfamily. In terms of assembly, part of the 50S ribosomal subunit; part of the 5S rRNA/L5/L18/L25 subcomplex. Contacts the 5S rRNA. Binds to the 5S rRNA independently of L5 and L18.

Functionally, this is one of the proteins that binds to the 5S RNA in the ribosome where it forms part of the central protuberance. The chain is Large ribosomal subunit protein bL25 from Erythrobacter litoralis (strain HTCC2594).